Consider the following 448-residue polypeptide: Probable glycine dehydrogenase (decarboxylating) subunit 1 (448 aa).

Belongs to the GcvP family. N-terminal subunit subfamily. The glycine cleavage system is composed of four proteins: P, T, L and H. In this organism, the P 'protein' is a heterodimer of two subunits.

The catalysed reaction is N(6)-[(R)-lipoyl]-L-lysyl-[glycine-cleavage complex H protein] + glycine + H(+) = N(6)-[(R)-S(8)-aminomethyldihydrolipoyl]-L-lysyl-[glycine-cleavage complex H protein] + CO2. The glycine cleavage system catalyzes the degradation of glycine. The P protein binds the alpha-amino group of glycine through its pyridoxal phosphate cofactor; CO(2) is released and the remaining methylamine moiety is then transferred to the lipoamide cofactor of the H protein. This is Probable glycine dehydrogenase (decarboxylating) subunit 1 from Pyrococcus furiosus (strain ATCC 43587 / DSM 3638 / JCM 8422 / Vc1).